Reading from the N-terminus, the 541-residue chain is Anthranilate synthase component 1 (541 aa).

L-tryptophan contacts are provided by residues serine 61 and 311 to 313 (PYM). Residue 348-349 (GT) participates in chorismate binding. Residue glutamate 381 participates in Mg(2+) binding. Residues tyrosine 469, arginine 489, 503–505 (GAG), and glycine 505 contribute to the chorismate site. Glutamate 518 is a Mg(2+) binding site.

The protein belongs to the anthranilate synthase component I family. In terms of assembly, heterotetramer consisting of two non-identical subunits: a beta subunit (TrpG) and a large alpha subunit (TrpE). It depends on Mg(2+) as a cofactor.

The enzyme catalyses chorismate + L-glutamine = anthranilate + pyruvate + L-glutamate + H(+). It functions in the pathway amino-acid biosynthesis; L-tryptophan biosynthesis; L-tryptophan from chorismate: step 1/5. Its activity is regulated as follows. Feedback inhibited by tryptophan. Functionally, part of a heterotetrameric complex that catalyzes the two-step biosynthesis of anthranilate, an intermediate in the biosynthesis of L-tryptophan. In the first step, the glutamine-binding beta subunit (TrpG) of anthranilate synthase (AS) provides the glutamine amidotransferase activity which generates ammonia as a substrate that, along with chorismate, is used in the second step, catalyzed by the large alpha subunit of AS (TrpE) to produce anthranilate. In the absence of TrpG, TrpE can synthesize anthranilate directly from chorismate and high concentrations of ammonia. This chain is Anthranilate synthase component 1 (trpE), found in Vibrio parahaemolyticus serotype O3:K6 (strain RIMD 2210633).